The sequence spans 167 residues: SsrA-binding protein (167 aa).

Belongs to the SmpB family.

Its subcellular location is the cytoplasm. In terms of biological role, required for rescue of stalled ribosomes mediated by trans-translation. Binds to transfer-messenger RNA (tmRNA), required for stable association of tmRNA with ribosomes. tmRNA and SmpB together mimic tRNA shape, replacing the anticodon stem-loop with SmpB. tmRNA is encoded by the ssrA gene; the 2 termini fold to resemble tRNA(Ala) and it encodes a 'tag peptide', a short internal open reading frame. During trans-translation Ala-aminoacylated tmRNA acts like a tRNA, entering the A-site of stalled ribosomes, displacing the stalled mRNA. The ribosome then switches to translate the ORF on the tmRNA; the nascent peptide is terminated with the 'tag peptide' encoded by the tmRNA and targeted for degradation. The ribosome is freed to recommence translation, which seems to be the essential function of trans-translation. This chain is SsrA-binding protein, found in Stenotrophomonas maltophilia (strain R551-3).